The following is a 203-amino-acid chain: Urease accessory protein UreE (203 aa).

Positions 170-190 are enriched in basic and acidic residues; that stretch reads EHHGHSHSRSHDHDHDHDHQH. Residues 170–203 are disordered; sequence EHHGHSHSRSHDHDHDHDHQHGPSCSHGHHHGHR.

This sequence belongs to the UreE family.

The protein localises to the cytoplasm. Functionally, involved in urease metallocenter assembly. Binds nickel. Probably functions as a nickel donor during metallocenter assembly. This Burkholderia pseudomallei (strain 1710b) protein is Urease accessory protein UreE.